The following is a 231-amino-acid chain: MGQKSNPIGMRLQINRTWDSRWYADGADYGRLLLEDLKIRKHIMKAIPQAAISKVVIERPAKLCRISVYAARPGVIIGKKGADIEKLRRALGKMTSSDVSLNIVEIRKPEIDSKLVAQGVADQLERRIAFRRAMKRAVQSALRLGAEGIRITCAGRLGGAEIARTEWYREGRVPLHTLRANVDYAEAEAHTAYGVCGIKVWIFKGEILGHDPLAQDRLMMEAQTSGVRPAR.

The 69-residue stretch at 39–107 (IRKHIMKAIP…DVSLNIVEIR (69 aa)) folds into the KH type-2 domain.

It belongs to the universal ribosomal protein uS3 family. Part of the 30S ribosomal subunit. Forms a tight complex with proteins S10 and S14.

Its function is as follows. Binds the lower part of the 30S subunit head. Binds mRNA in the 70S ribosome, positioning it for translation. This chain is Small ribosomal subunit protein uS3, found in Rhizorhabdus wittichii (strain DSM 6014 / CCUG 31198 / JCM 15750 / NBRC 105917 / EY 4224 / RW1) (Sphingomonas wittichii).